The sequence spans 246 residues: MSQKVATKTAPVPESILKKRATSQKKAVDVAKLGRAQQLRNSRLNSVYFKRAEKYVSEYHKTEREAIRLNRIAKNSGTFYVPPAAKVAFVIRIRGINGVSPKPRKVLKLLRLLQLNNGVFVKLNKASINMLKLVEPYVAYGFPNLKSIKELIYKRGHLKIDGQRIPLTSNDMVEKQLGKFGIICVEDIIHEITTCGKHFKQVNNSLWPFKLNCPRGGFNMKKTPFLQGGDAGNREHLINNLIHRMN.

It belongs to the universal ribosomal protein uL30 family.

In terms of biological role, binds to G-rich structures in 28S rRNA and in mRNAs. Plays a regulatory role in the translation apparatus; inhibits cell-free translation of mRNAs. This Dictyostelium discoideum (Social amoeba) protein is Large ribosomal subunit protein uL30 (rpl7).